Reading from the N-terminus, the 109-residue chain is Large ribosomal subunit protein uL22 (109 aa).

Belongs to the universal ribosomal protein uL22 family. As to quaternary structure, part of the 50S ribosomal subunit.

In terms of biological role, this protein binds specifically to 23S rRNA; its binding is stimulated by other ribosomal proteins, e.g. L4, L17, and L20. It is important during the early stages of 50S assembly. It makes multiple contacts with different domains of the 23S rRNA in the assembled 50S subunit and ribosome. Functionally, the globular domain of the protein is located near the polypeptide exit tunnel on the outside of the subunit, while an extended beta-hairpin is found that lines the wall of the exit tunnel in the center of the 70S ribosome. This is Large ribosomal subunit protein uL22 from Dehalococcoides mccartyi (strain ATCC BAA-2266 / KCTC 15142 / 195) (Dehalococcoides ethenogenes (strain 195)).